The following is a 459-amino-acid chain: N(6)-adenosine-methyltransferase non-catalytic subunit METTL14 (459 aa).

Residues 50–73 (TCRASYDTSAPNAKRKYPDEGEAD) form a disordered region. 2 interaction with METTL3 regions span residues 135 to 136 (RD) and 237 to 238 (SG). The segment at 245-254 (RVCLRKWGYR) is positively charged region required for RNA-binding. Interaction with METTL3 stretches follow at residues 255-258 (RCED) and 278-287 (KAVFQRTKEH). The positively charged region required for RNA-binding stretch occupies residues 297–298 (RR). The interaction with METTL3 stretch occupies residues 308-312 (NVDID). A disordered region spans residues 392-459 (IERLRPKSPP…GTHRGGFPTR (68 aa)). Positions 409–423 (GGGAPRGGGRGGTSA) are enriched in gly residues. Positions 425 to 443 (RGERGRERNRTNFRGERGG) are enriched in basic and acidic residues. Residues 444-453 (FRGGRGGTHR) show a composition bias toward gly residues.

This sequence belongs to the MT-A70-like family. Heterodimer; heterodimerizes with METTL3 to form an antiparallel heterodimer that constitutes an active methyltransferase. Component of the WMM complex, a N6-methyltransferase complex composed of a catalytic subcomplex, named MAC, and of an associated subcomplex, named MACOM. The MAC subcomplex is composed of METTL3 and METTL14.

The protein localises to the nucleus. Its function is as follows. The METTL3-METTL14 heterodimer forms a N6-methyltransferase complex that methylates adenosine residues at the N(6) position of some mRNAs and regulates the circadian clock, differentiation of embryonic stem cells and cortical neurogenesis. In the heterodimer formed with METTL3, METTL14 constitutes the RNA-binding scaffold that recognizes the substrate rather than the catalytic core. N6-methyladenosine (m6A), which takes place at the 5'-[AG]GAC-3' consensus sites of some mRNAs, plays a role in mRNA stability and processing. This chain is N(6)-adenosine-methyltransferase non-catalytic subunit METTL14 (METTL14), found in Gallus gallus (Chicken).